Here is a 78-residue protein sequence, read N- to C-terminus: Small ribosomal subunit protein uS17 (78 aa).

Belongs to the universal ribosomal protein uS17 family. As to quaternary structure, part of the 30S ribosomal subunit.

In terms of biological role, one of the primary rRNA binding proteins, it binds specifically to the 5'-end of 16S ribosomal RNA. The polypeptide is Small ribosomal subunit protein uS17 (Parvibaculum lavamentivorans (strain DS-1 / DSM 13023 / NCIMB 13966)).